The following is a 1726-amino-acid chain: Transcription elongation factor SPT6 (1726 aa).

Composition is skewed to acidic residues over residues 1-18 (MSDFIESEAEESEEEFEE), 31-45 (EEDEEEEEENTEDQD), and 55-79 (DDDDVEEEEEEERGEPPAGEDSDSG). Disordered stretches follow at residues 1–196 (MSDF…KGKK), 219–248 (AEFDTEAYDHAEEEEEDQDDESWDRPKKQT), and 482–512 (EVSEEDGEEAEVEEEEEEEEQKGPDLKQASR). Residue S90 is modified to Phosphoserine. Residues 93-104 (DYLDDDDLDLIE) show a composition bias toward acidic residues. The segment covering 110–120 (KVKRRKKKYSR) has biased composition (basic residues). 4 stretches are compositionally biased toward acidic residues: residues 146 to 157 (GDGEGEVEDGEA), 166 to 186 (DEEEEDDEESDIDDFIVDDDG), 219 to 240 (AEFDTEAYDHAEEEEEDQDDES), and 484 to 501 (SEEDGEEAEVEEEEEEEE). The segment covering 502–512 (QKGPDLKQASR) has biased composition (basic and acidic residues). A coiled-coil region spans residues 806–865 (LKRRNAWREDEREKKQQDVENLKKFLLSKKPHVVAVSGENRDAHMVMEDIKRTISELEQN). The region spanning 1204-1273 (WNHFDSGSCP…EKFNVDLTCR (70 aa)) is the S1 motif domain. An SH2 domain is found at 1316–1426 (YIKRVIAHPS…LLGHKYFHEC (111 aa)). At T1522 the chain carries Phosphothreonine. Phosphoserine is present on S1525. Over residues 1611–1627 (LMTPSYSYTTPGQQQAM) the composition is skewed to polar residues. Residues 1611–1726 (LMTPSYSYTT…ATPLLDEMDR (116 aa)) are disordered. Composition is skewed to low complexity over residues 1628 to 1640 (TTPQYPSSTPQSS) and 1647 to 1656 (SSSTPSSSSS). The segment covering 1657–1669 (RVRTPQPKASSHT) has biased composition (polar residues).

Belongs to the SPT6 family.

Its subcellular location is the nucleus. In terms of biological role, histone H3-H4 chaperone that plays a role in maintenance of chromatin structure during RNA polymerase II transcription elongation. Promotes the activation of the myogenic gene program by entailing erasure of the repressive H3K27me3 epigenetic mark through stabilization of the chromatin interaction of the H3K27 demethylase KDM6A. Plays an important role during early patterning and somitogenesis of the embryo. This is Transcription elongation factor SPT6 (supt6h) from Danio rerio (Zebrafish).